Reading from the N-terminus, the 54-residue chain is Sec-independent protein translocase protein TatA (54 aa).

The helical transmembrane segment at M1–A21 threads the bilayer.

Belongs to the TatA/E family. The Tat system comprises two distinct complexes: a TatABC complex, containing multiple copies of TatA, TatB and TatC subunits, and a separate TatA complex, containing only TatA subunits. Substrates initially bind to the TatABC complex, which probably triggers association of the separate TatA complex to form the active translocon.

It localises to the cell inner membrane. Its function is as follows. Part of the twin-arginine translocation (Tat) system that transports large folded proteins containing a characteristic twin-arginine motif in their signal peptide across membranes. TatA could form the protein-conducting channel of the Tat system. In Rickettsia canadensis (strain McKiel), this protein is Sec-independent protein translocase protein TatA.